The sequence spans 336 residues: Aspartate--ammonia ligase (336 aa).

Belongs to the class-II aminoacyl-tRNA synthetase family. AsnA subfamily.

The protein resides in the cytoplasm. It carries out the reaction L-aspartate + NH4(+) + ATP = L-asparagine + AMP + diphosphate + H(+). It participates in amino-acid biosynthesis; L-asparagine biosynthesis; L-asparagine from L-aspartate (ammonia route): step 1/1. The protein is Aspartate--ammonia ligase of Limosilactobacillus reuteri (strain DSM 20016) (Lactobacillus reuteri).